The chain runs to 979 residues: UPF0182 protein BCG_0095 (979 aa).

Helical transmembrane passes span 19–39, 63–83, 114–134, 174–194, 211–231, 260–280, and 288–308; these read LVTA…LVDI, LAIV…ALLL, LFGW…ASFD, WLFV…YLFG, VQLA…YWLD, KLVL…AIFL, and MAAA…PLLM. Residues 898 to 948 are disordered; it reads GTGRVATAPGGDAASAPPPGAGGPAPPQAVPPPRTTQPPAAPPRGPDVPPA. The segment covering 902–912 has biased composition (low complexity); the sequence is VATAPGGDAAS. Positions 913–946 are enriched in pro residues; sequence APPPGAGGPAPPQAVPPPRTTQPPAAPPRGPDVP.

The protein belongs to the UPF0182 family.

It localises to the cell membrane. The chain is UPF0182 protein BCG_0095 from Mycobacterium bovis (strain BCG / Pasteur 1173P2).